Reading from the N-terminus, the 232-residue chain is Chaperone protein CssC (232 aa).

Positions 1 to 20 are cleaved as a signal peptide; it reads MKSKLIILLMLVPFSSFSTE.

This sequence belongs to the periplasmic pilus chaperone family.

It is found in the periplasm. Its function is as follows. Involved in the biogenesis of the CS6 fimbria. This Escherichia coli protein is Chaperone protein CssC (cssC).